Here is a 697-residue protein sequence, read N- to C-terminus: Protein Niban 3 (697 aa).

Residues methionine 1–leucine 48 form a disordered region.

This sequence belongs to the Niban family. As to expression, specifically expressed in B-lymphocytes.

This Homo sapiens (Human) protein is Protein Niban 3.